The chain runs to 185 residues: Ribosome-recycling factor (185 aa).

This sequence belongs to the RRF family.

It localises to the cytoplasm. Responsible for the release of ribosomes from messenger RNA at the termination of protein biosynthesis. May increase the efficiency of translation by recycling ribosomes from one round of translation to another. The sequence is that of Ribosome-recycling factor from Ehrlichia ruminantium (strain Welgevonden).